The sequence spans 311 residues: MNNGTSPAGGETEATQTRSGFVALIGAPNAGKSTLVNQLVGTKVSIVTHKVQTTRALVRGIFIEGPAQIVLVDTPGIFRPKRRLDRAMVTTAWGGAKDADIILVIIDAQGGFNENAEALLESMKDVRQKKVLVLNKVDRVDPPVLLSLAQKANGLVPFDRTFMISALNGSGCKDLAKYLAESVPNGPWYYPEDQISDMPMRQLAAEITREKLYLRLHEELPYASTVETERWEERKDGSVRIEQVIYVERESQKKIVLGHKGETVKAIGQAARKEISEILEQTVHQFLFVKVRENWGNDPERYREMGLDFPT.

Residues 18–185 enclose the Era-type G domain; that stretch reads RSGFVALIGA…AKYLAESVPN (168 aa). The segment at 26–33 is G1; sequence GAPNAGKS. A GTP-binding site is contributed by 26 to 33; that stretch reads GAPNAGKS. The segment at 52–56 is G2; it reads QTTRA. Positions 73–76 are G3; the sequence is DTPG. GTP-binding positions include 73–77 and 135–138; these read DTPGI and NKVD. Residues 135 to 138 form a G4 region; sequence NKVD. The tract at residues 164–166 is G5; sequence ISA. Positions 216 to 293 constitute a KH type-2 domain; it reads LHEELPYAST…HQFLFVKVRE (78 aa).

It belongs to the TRAFAC class TrmE-Era-EngA-EngB-Septin-like GTPase superfamily. Era GTPase family. In terms of assembly, monomer.

It localises to the cytoplasm. The protein localises to the cell inner membrane. An essential GTPase that binds both GDP and GTP, with rapid nucleotide exchange. Plays a role in 16S rRNA processing and 30S ribosomal subunit biogenesis and possibly also in cell cycle regulation and energy metabolism. The sequence is that of GTPase Era from Brucella melitensis biotype 1 (strain ATCC 23456 / CCUG 17765 / NCTC 10094 / 16M).